Reading from the N-terminus, the 242-residue chain is Protein HTATIP2 (242 aa).

Ala-2 carries the post-translational modification N-acetylalanine. The tract at residues 2–25 (AETEALSKLREDFRMQNKSVFILG) is required for interaction with elongation factor EEF1A1. 12 residues coordinate NADPH: Ser-27, Gly-28, Glu-29, Thr-30, Arg-52, Arg-53, Leu-92, Gly-93, Tyr-143, Lys-147, Leu-170, and Arg-178. Catalysis depends on Tyr-143, which acts as the Proton acceptor. Residue Lys-147 is part of the active site.

Monomer. Forms homodimers during oxidative stress. Interacts (via N-terminus) with elongation factor EEF1A1 (via middle-region); the interaction is direct and competes with EEF1A1 binding to guanyl-nucleotide exchange factor EEF1B2, thereby inhibiting GDP for GTP exchange and reactivation of EEF1A1. Interacts with nuclear transport receptors XPO4, IPO5/RANBP5, IPO7, IPO9 and KPNB1 as well as GCN1L1/GCN1 and LRPPRC probably through their HEAT repeats. Binds NCOA5/CIA.

The protein resides in the cytoplasm. Represses translation by preventing reactivation of elongation factor eEF1A. May also inhibit nuclear import by competing with nuclear import substrates for binding to a subset of nuclear transport receptors. Has additionally been proposed to act as a redox sensor involved in cellular oxidative stress surveillance. This Pongo pygmaeus (Bornean orangutan) protein is Protein HTATIP2 (HTATIP2).